The primary structure comprises 353 residues: tRNA pseudouridine synthase B (353 aa).

The Nucleophile role is filled by Asp-39.

Belongs to the pseudouridine synthase TruB family. Type 1 subfamily.

It catalyses the reaction uridine(55) in tRNA = pseudouridine(55) in tRNA. Its function is as follows. Responsible for synthesis of pseudouridine from uracil-55 in the psi GC loop of transfer RNAs. This is tRNA pseudouridine synthase B from Wolbachia pipientis subsp. Culex pipiens (strain wPip).